The primary structure comprises 479 residues: Protein nucleotidyltransferase YdiU (479 aa).

ATP contacts are provided by glycine 83, glycine 85, arginine 86, lysine 106, aspartate 118, glycine 119, arginine 169, and arginine 176. The active-site Proton acceptor is the aspartate 245. The Mg(2+) site is built by asparagine 246 and aspartate 255. An ATP-binding site is contributed by aspartate 255.

This sequence belongs to the SELO family. Mg(2+) serves as cofactor. The cofactor is Mn(2+).

The enzyme catalyses L-seryl-[protein] + ATP = 3-O-(5'-adenylyl)-L-seryl-[protein] + diphosphate. It carries out the reaction L-threonyl-[protein] + ATP = 3-O-(5'-adenylyl)-L-threonyl-[protein] + diphosphate. It catalyses the reaction L-tyrosyl-[protein] + ATP = O-(5'-adenylyl)-L-tyrosyl-[protein] + diphosphate. The catalysed reaction is L-histidyl-[protein] + UTP = N(tele)-(5'-uridylyl)-L-histidyl-[protein] + diphosphate. The enzyme catalyses L-seryl-[protein] + UTP = O-(5'-uridylyl)-L-seryl-[protein] + diphosphate. It carries out the reaction L-tyrosyl-[protein] + UTP = O-(5'-uridylyl)-L-tyrosyl-[protein] + diphosphate. Functionally, nucleotidyltransferase involved in the post-translational modification of proteins. It can catalyze the addition of adenosine monophosphate (AMP) or uridine monophosphate (UMP) to a protein, resulting in modifications known as AMPylation and UMPylation. This is Protein nucleotidyltransferase YdiU from Erwinia tasmaniensis (strain DSM 17950 / CFBP 7177 / CIP 109463 / NCPPB 4357 / Et1/99).